Reading from the N-terminus, the 487-residue chain is ATP synthase subunit beta (487 aa).

171-178 provides a ligand contact to ATP; sequence GGAGVGKT.

The protein belongs to the ATPase alpha/beta chains family. In terms of assembly, F-type ATPases have 2 components, CF(1) - the catalytic core - and CF(0) - the membrane proton channel. CF(1) has five subunits: alpha(3), beta(3), gamma(1), delta(1), epsilon(1). CF(0) has three main subunits: a(1), b(2) and c(9-12). The alpha and beta chains form an alternating ring which encloses part of the gamma chain. CF(1) is attached to CF(0) by a central stalk formed by the gamma and epsilon chains, while a peripheral stalk is formed by the delta and b chains.

It localises to the cell membrane. It carries out the reaction ATP + H2O + 4 H(+)(in) = ADP + phosphate + 5 H(+)(out). In terms of biological role, produces ATP from ADP in the presence of a proton gradient across the membrane. The catalytic sites are hosted primarily by the beta subunits. In Leifsonia xyli subsp. xyli (strain CTCB07), this protein is ATP synthase subunit beta.